A 477-amino-acid polypeptide reads, in one-letter code: Aspartyl/glutamyl-tRNA(Asn/Gln) amidotransferase subunit B (477 aa).

It belongs to the GatB/GatE family. GatB subfamily. In terms of assembly, heterotrimer of A, B and C subunits.

It catalyses the reaction L-glutamyl-tRNA(Gln) + L-glutamine + ATP + H2O = L-glutaminyl-tRNA(Gln) + L-glutamate + ADP + phosphate + H(+). The enzyme catalyses L-aspartyl-tRNA(Asn) + L-glutamine + ATP + H2O = L-asparaginyl-tRNA(Asn) + L-glutamate + ADP + phosphate + 2 H(+). Its function is as follows. Allows the formation of correctly charged Asn-tRNA(Asn) or Gln-tRNA(Gln) through the transamidation of misacylated Asp-tRNA(Asn) or Glu-tRNA(Gln) in organisms which lack either or both of asparaginyl-tRNA or glutaminyl-tRNA synthetases. The reaction takes place in the presence of glutamine and ATP through an activated phospho-Asp-tRNA(Asn) or phospho-Glu-tRNA(Gln). The polypeptide is Aspartyl/glutamyl-tRNA(Asn/Gln) amidotransferase subunit B (Coxiella burnetii (strain CbuK_Q154) (Coxiella burnetii (strain Q154))).